A 610-amino-acid polypeptide reads, in one-letter code: Manganese lipoxygenase (610 aa).

An N-terminal signal peptide occupies residues 1–16 (MVALLIFLGIFTCVET). In terms of domain architecture, Lipoxygenase spans 47-610 (FTLPNEDDEI…PGVIPFYLSV (564 aa)). Residues Asn-157 and Asn-259 are each glycosylated (N-linked (GlcNAc...) asparagine). The Mn(2+) site is built by His-290 and His-295. Residue Asn-386 is glycosylated (N-linked (GlcNAc...) asparagine). Residues His-475 and Asn-479 each contribute to the Mn(2+) site. The N-linked (GlcNAc...) asparagine glycan is linked to Asn-540. Val-610 provides a ligand contact to Mn(2+).

The protein belongs to the lipoxygenase family. Manganese lipoxygenase subfamily. It depends on Mn(2+) as a cofactor. In terms of processing, N- and O-glycosylated.

It is found in the secreted. It carries out the reaction (9Z,12Z)-octadecadienoate + O2 = (11S)-hydroperoxy-(9Z,12Z)-octadecadienoate. The enzyme catalyses (9Z,12Z)-octadecadienoate + O2 = (11R)-hydroperoxy-(9Z,12Z)-octadecadienoate. The catalysed reaction is (9Z,12Z)-octadecadienoate + O2 = (13S)-hydroperoxy-(9Z,11E)-octadecadienoate. It catalyses the reaction (9Z,12Z,15Z)-octadecatrienoate + O2 = (11S)-hydroperoxy-(9Z,12Z,15Z)-octadecatrienoate. Lipoxygenase that metabolizes linoleic and alpha-linolenic acids to 9-, 11- and 13-hydroperoxy fatty acids. Oxidizes linoleic acid to mainly 11R-, 13S- and racemic 9-HPODE, and alpha-linolenic acid to 11-HPOTrE. This Fusarium oxysporum (strain Fo5176) (Fusarium vascular wilt) protein is Manganese lipoxygenase.